We begin with the raw amino-acid sequence, 289 residues long: Trimeric intracellular cation channel type B (289 aa).

The Lumenal portion of the chain corresponds to 1-18; the sequence is MDVFAFFNLNELAFGLSK. A helical transmembrane segment spans residues 19–36; sequence LPMFPYFDMAHYIISVMS. Topologically, residues 37-49 are cytoplasmic; that stretch reads LREQPGALCVSQR. A helical transmembrane segment spans residues 50 to 73; the sequence is SPLACWFSSMLYCFGGAVLSALML. Residues 74–85 lie on the Lumenal side of the membrane; that stretch reads ADAPVAPLSNTT. Residues 86–103 traverse the membrane as a helical segment; sequence NLLLATLMWYLVFYCPLD. Residues 104–107 are Cytoplasmic-facing; the sequence is VVYS. The helical transmembrane segment at 108–125 threads the bilayer; sequence LASLLPLRLVLTAMKEVT. Residues lysine 122 and arginine 126 each contribute to the a 1,2-diacyl-sn-glycero-3-phospho-(1D-myo-inositol-4,5-bisphosphate) site. Residues 126–144 are Lumenal-facing; it reads RTWKVLSGVSQAGSKYSDA. A helical transmembrane segment spans residues 145–162; it reads LFVMVAVGWAKGAGGGLI. Topologically, residues 163-183 are cytoplasmic; that stretch reads SNFEQLVRGVWKPETNELLKM. A helical transmembrane segment spans residues 184–201; that stretch reads SYPTKVTLLGAVVFSLQQ. Over 202–210 the chain is Lumenal; it reads CRYLPIQTH. Residues 211 to 230 form a helical membrane-spanning segment; it reads HLTFIYTLFTVTNKTRMMLL. The Cytoplasmic segment spans residues 231 to 289; it reads GSSSHPLSSLESFLYKTLFVRPLTDLSAEHTHSKHNGSVPEPTTAQTHTKEAEASKKTN. Residues 260-289 form a disordered region; it reads HTHSKHNGSVPEPTTAQTHTKEAEASKKTN. Residues 278–289 are compositionally biased toward basic and acidic residues; the sequence is HTKEAEASKKTN.

The protein belongs to the TMEM38 family. Homotrimer; conformation seems to be controled by binding to diacylglycerol (DAG).

The protein resides in the endoplasmic reticulum membrane. The catalysed reaction is K(+)(in) = K(+)(out). With respect to regulation, channel activity is activated by increased cytosolic Ca(2+) levels and blocked by luminal high Ca(2+) levels. Functionally, intracellular monovalent cation channel required for maintenance of rapid intracellular calcium release. Acts as a potassium counter-ion channel that functions in synchronization with calcium release from intracellular stores. Activated by increased cytosolic Ca(2+) levels. The chain is Trimeric intracellular cation channel type B (tmem38b) from Danio rerio (Zebrafish).